Here is a 246-residue protein sequence, read N- to C-terminus: tRNA (guanine-N(1)-)-methyltransferase (246 aa).

Residues glycine 114 and 133-138 contribute to the S-adenosyl-L-methionine site; that span reads LGDYVL.

It belongs to the RNA methyltransferase TrmD family. In terms of assembly, homodimer.

It localises to the cytoplasm. It carries out the reaction guanosine(37) in tRNA + S-adenosyl-L-methionine = N(1)-methylguanosine(37) in tRNA + S-adenosyl-L-homocysteine + H(+). In terms of biological role, specifically methylates guanosine-37 in various tRNAs. The protein is tRNA (guanine-N(1)-)-methyltransferase of Enterococcus faecalis (strain ATCC 700802 / V583).